Reading from the N-terminus, the 82-residue chain is MQANIFVFAFLLLSVAVAAYGYQPECLEPSLYGCRGDEDATFGWTFDREDGGCRQGSYCTRFGQPKNYFRSEGDCKKACGGA.

A signal peptide spans methionine 1–glycine 21. 3 cysteine pairs are disulfide-bonded: cysteine 26-cysteine 79, cysteine 34-cysteine 59, and cysteine 53-cysteine 75. The Cell attachment site motif lies at arginine 35–aspartate 37.

As to expression, expressed in salivary glands.

It localises to the cytoplasmic vesicle. The protein resides in the secretory vesicle. Its subcellular location is the secreted. In terms of biological role, tick salivary platelet aggregation inhibitor that plays an important part in the anti-hemostatic strategy of ticks. Inhibits platelet aggregation induced by ADP (IC(50)=130 nM), collagen, the thrombin receptor-activating peptide, and epinephrine, although platelets are activated and their shape changed. Binding to platelets is similar for resting and activated platelets (Kd=50-70 nM). Acts by specifically binding to platelet membrane glycoprotein IIb-IIIa (ITGA2B/ITGB3) in a divalent metal ion dependent manner. In contrast to many disintegrins which only interacts with the beta-3 subunit, this protein interacts with the two subunits (alpha-IIb and beta-3). Also causes disaggregation of aggregated platelets without influencing the activated spherical shape associated with aggregated platelets and causes a decrease in the number of pseudopodia on the activated platelet surface. Does not show any inhibitory activity for the different serine proteases tested. In Ornithodoros kalahariensis (Tick), this protein is Savignygrin (-).